The following is a 629-amino-acid chain: tRNA uridine 5-carboxymethylaminomethyl modification enzyme MnmG (629 aa).

FAD contacts are provided by residues 13–18 (GGGHAG), Val125, and Ser180. 273–287 (GPRYCPSIEDKVMRF) serves as a coordination point for NAD(+). Gln370 serves as a coordination point for FAD.

Belongs to the MnmG family. In terms of assembly, homodimer. Heterotetramer of two MnmE and two MnmG subunits. It depends on FAD as a cofactor.

It is found in the cytoplasm. In terms of biological role, NAD-binding protein involved in the addition of a carboxymethylaminomethyl (cmnm) group at the wobble position (U34) of certain tRNAs, forming tRNA-cmnm(5)s(2)U34. The sequence is that of tRNA uridine 5-carboxymethylaminomethyl modification enzyme MnmG from Salmonella paratyphi C (strain RKS4594).